A 177-amino-acid polypeptide reads, in one-letter code: ATP synthase subunit delta (177 aa).

It belongs to the ATPase delta chain family. F-type ATPases have 2 components, F(1) - the catalytic core - and F(0) - the membrane proton channel. F(1) has five subunits: alpha(3), beta(3), gamma(1), delta(1), epsilon(1). F(0) has three main subunits: a(1), b(2) and c(10-14). The alpha and beta chains form an alternating ring which encloses part of the gamma chain. F(1) is attached to F(0) by a central stalk formed by the gamma and epsilon chains, while a peripheral stalk is formed by the delta and b chains.

It localises to the cell inner membrane. In terms of biological role, f(1)F(0) ATP synthase produces ATP from ADP in the presence of a proton or sodium gradient. F-type ATPases consist of two structural domains, F(1) containing the extramembraneous catalytic core and F(0) containing the membrane proton channel, linked together by a central stalk and a peripheral stalk. During catalysis, ATP synthesis in the catalytic domain of F(1) is coupled via a rotary mechanism of the central stalk subunits to proton translocation. Functionally, this protein is part of the stalk that links CF(0) to CF(1). It either transmits conformational changes from CF(0) to CF(1) or is implicated in proton conduction. This Vibrio cholerae serotype O1 (strain ATCC 39541 / Classical Ogawa 395 / O395) protein is ATP synthase subunit delta.